A 185-amino-acid chain; its full sequence is MTGKLIWLMGPSGSGKDSLLAELRLREQTQLLVAHRYITRDASAGSENHIALSEQEFFTRAGQNLLALSWHANGLYYGVGVEIDLWLHAGFDVLVNGSRAHLPQARARYQSALLPICLQVSPEILRQRLENRGRENASEINARLVRAARYTPQDCHTLNNDGSLCQSVDTLLTLIHQKEKHHACL.

Position 10-17 (10-17) interacts with ATP; it reads GPSGSGKD.

The protein belongs to the ribose 1,5-bisphosphokinase family.

It catalyses the reaction alpha-D-ribose 1,5-bisphosphate + ATP = 5-phospho-alpha-D-ribose 1-diphosphate + ADP. The protein operates within metabolic intermediate biosynthesis; 5-phospho-alpha-D-ribose 1-diphosphate biosynthesis; 5-phospho-alpha-D-ribose 1-diphosphate from D-ribose 5-phosphate (route II): step 3/3. Catalyzes the phosphorylation of ribose 1,5-bisphosphate to 5-phospho-D-ribosyl alpha-1-diphosphate (PRPP). In Shigella dysenteriae serotype 1 (strain Sd197), this protein is Ribose 1,5-bisphosphate phosphokinase PhnN.